We begin with the raw amino-acid sequence, 89 residues long: UPF0237 protein CPE1496 (89 aa).

Positions 4–84 (VITVVGKDKV…ISVQHEDIFN (81 aa)) constitute an ACT domain.

It belongs to the UPF0237 family.

This chain is UPF0237 protein CPE1496, found in Clostridium perfringens (strain 13 / Type A).